A 39-amino-acid chain; its full sequence is uncharacterized protein (39 aa).

Residues 18–38 form a helical membrane-spanning segment; the sequence is AIKVIALVVLITISAVVYLSV.

It localises to the membrane. This is an uncharacterized protein from Enterobacteriaceae (Bacteriophage Mu).